The sequence spans 304 residues: Serine/threonine-protein phosphatase PP1 isozyme 3 (304 aa).

Positions 61, 63, 89, and 121 each coordinate Mn(2+). Residue His-122 is the Proton donor of the active site. Mn(2+) contacts are provided by His-170 and His-245.

The protein belongs to the PPP phosphatase family. PP-1 subfamily. Mn(2+) serves as cofactor.

The enzyme catalyses O-phospho-L-seryl-[protein] + H2O = L-seryl-[protein] + phosphate. The catalysed reaction is O-phospho-L-threonyl-[protein] + H2O = L-threonyl-[protein] + phosphate. The sequence is that of Serine/threonine-protein phosphatase PP1 isozyme 3 (NPP3) from Nicotiana tabacum (Common tobacco).